A 238-amino-acid polypeptide reads, in one-letter code: 2-phytyl-1,4-naphtoquinone methyltransferase (238 aa).

Belongs to the class I-like SAM-binding methyltransferase superfamily. MenG/UbiE family.

It catalyses the reaction demethylphylloquinol + S-adenosyl-L-methionine = phylloquinol + S-adenosyl-L-homocysteine + H(+). It functions in the pathway cofactor biosynthesis; phylloquinone biosynthesis. Its function is as follows. Methyltransferase required for the conversion of 2-phytyl-1,4-beta-naphthoquinol to phylloquinol. The polypeptide is 2-phytyl-1,4-naphtoquinone methyltransferase (Synechocystis sp. (strain ATCC 27184 / PCC 6803 / Kazusa)).